We begin with the raw amino-acid sequence, 184 residues long: ATP synthase subunit delta (184 aa).

It belongs to the ATPase delta chain family. As to quaternary structure, F-type ATPases have 2 components, F(1) - the catalytic core - and F(0) - the membrane proton channel. F(1) has five subunits: alpha(3), beta(3), gamma(1), delta(1), epsilon(1). F(0) has three main subunits: a(1), b(2) and c(10-14). The alpha and beta chains form an alternating ring which encloses part of the gamma chain. F(1) is attached to F(0) by a central stalk formed by the gamma and epsilon chains, while a peripheral stalk is formed by the delta and b chains.

It is found in the cell inner membrane. Its function is as follows. F(1)F(0) ATP synthase produces ATP from ADP in the presence of a proton or sodium gradient. F-type ATPases consist of two structural domains, F(1) containing the extramembraneous catalytic core and F(0) containing the membrane proton channel, linked together by a central stalk and a peripheral stalk. During catalysis, ATP synthesis in the catalytic domain of F(1) is coupled via a rotary mechanism of the central stalk subunits to proton translocation. This protein is part of the stalk that links CF(0) to CF(1). It either transmits conformational changes from CF(0) to CF(1) or is implicated in proton conduction. The sequence is that of ATP synthase subunit delta from Rickettsia canadensis (strain McKiel).